The sequence spans 815 residues: Cell division control protein 53 (815 aa).

The required for interaction with SKP1/CBF3D and F-box protein stretch occupies residues 9 to 280 (DDLEATWNFI…WDDHTKKPLS (272 aa)). Residues 448–748 (KKATKPEVAS…IEKELNTERQ (301 aa)) are required for interaction with CDC34/UBC3. The 62-residue stretch at 746–807 (ERQIFLEACI…QKGYLQRGDD (62 aa)) folds into the Cullin neddylation domain. K760 is covalently cross-linked (Glycyl lysine isopeptide (Lys-Gly) (interchain with G-Cter in NEDD8)).

It belongs to the cullin family. As to quaternary structure, component of multiple SCF (SKP1-CUL1-F-box) E3 ubiquitin-protein ligase complexes formed of CUL1, SKP1/HRT1, RBX1 and a variable F-box domain-containing protein as substrate-specific adapter. Component of the SCF(CDC4) complex containing CDC4. Component of the SCF(MET30) complex containing MET30. Component of the SCF(GRR1) complex containing GRR1. Component of the probable SCF(DIA2) complex containing DIA2. Component of the probable SCF(YDR131C) complex containing YDR131C. Component of the probable SCF(YDR306C) complex containing YDR306C. Component of the probable SCF(YLR224W) complex containing YLR224W. Component of the probable SCF(YJL149W) complex containing YJL149W. Component of the probable SCF(YNL311C) complex containing YNL311C. Component of the probable SCF(MDM30) complex containing MDM30. Component of the probable SCF(UFO1) complex containing UFO1. Component of the probable SCF(HRT3) complex containing HRT3. Component of the probable SCF(YBR280C) complex containing YBR280C. Component of the probable SCF(YBR352W) complex containing YBR352W. Interacts with DCN1, YBR280C, YLR224W and YLR352W. The unneddylated form interacts with LAG2/CAND1 and the interaction mediates the exchange of the F-box substrate-specific subunit. Post-translationally, neddylated; enhancing the ubiquitin-ligase activity.

The protein localises to the cytoplasm. The protein resides in the nucleus. Functionally, core component of multiple cullin-RING-based SCF (SKP1-CUL1-F-box) E3 ubiquitin-protein ligase complexes which mediate the ubiquitination and subsequent proteasomal degradation of target proteins. As a scaffold protein may contribute to catalysis through positioning of the substrate and the ubiquitin-conjugating enzyme. The SCF complex associates with CDC34 as the E2 ubiquitin-conjugating enzyme. The functional specificity of the SCF complex depends on the type of F-box protein. SCF(CDC4) controls the G1-to-S phase transition; it directs ubiquitination of the phosphorylated CDK inhibitor SIC1 and of CDC6. SCF(CDC4) directs ubiquitination of GCN4. SCF(GRR1) directs ubiquitination of phosphorylated CLN1, CLN2 and GIC2. SCF(MET30) directs ubiquitination of MET4. SCF(DIA2) is specifically involved in the pheromone induced degradation of phosphorylated TEC1. SCF(MDM30) seems to direct ubiquitination of FZ01. Involved in the regulation of methionine biosynthesis genes. The chain is Cell division control protein 53 (CDC53) from Saccharomyces cerevisiae (strain ATCC 204508 / S288c) (Baker's yeast).